Reading from the N-terminus, the 163-residue chain is Ribosome maturation factor RimP (163 aa).

This sequence belongs to the RimP family.

Its subcellular location is the cytoplasm. Required for maturation of 30S ribosomal subunits. The sequence is that of Ribosome maturation factor RimP from Streptococcus mutans serotype c (strain ATCC 700610 / UA159).